The following is a 339-amino-acid chain: DNA-directed RNA polymerase subunit alpha (339 aa).

Positions 1–235 are alpha N-terminal domain (alpha-NTD); that stretch reads MVIQKNWQEL…DQLQVFVNFE (235 aa). The interval 251–339 is alpha C-terminal domain (alpha-CTD); that stretch reads FNPALLKKVD…DLAKRFEEHY (89 aa).

This sequence belongs to the RNA polymerase alpha chain family. In terms of assembly, homodimer. The RNAP catalytic core consists of 2 alpha, 1 beta, 1 beta' and 1 omega subunit. When a sigma factor is associated with the core the holoenzyme is formed, which can initiate transcription.

It carries out the reaction RNA(n) + a ribonucleoside 5'-triphosphate = RNA(n+1) + diphosphate. DNA-dependent RNA polymerase catalyzes the transcription of DNA into RNA using the four ribonucleoside triphosphates as substrates. In Methylobacterium radiotolerans (strain ATCC 27329 / DSM 1819 / JCM 2831 / NBRC 15690 / NCIMB 10815 / 0-1), this protein is DNA-directed RNA polymerase subunit alpha.